Reading from the N-terminus, the 216-residue chain is UPF0301 protein BBta_6966 (216 aa).

Belongs to the UPF0301 (AlgH) family.

The sequence is that of UPF0301 protein BBta_6966 from Bradyrhizobium sp. (strain BTAi1 / ATCC BAA-1182).